A 269-amino-acid polypeptide reads, in one-letter code: Short-chain dehydrogenase/reductase ABA4 (269 aa).

NADP(+) contacts are provided by I34, D80, R144, Y174, K178, I207, and T209. Y174 serves as the catalytic Proton donor. Residue K178 is the Lowers pKa of active site Tyr of the active site.

It belongs to the short-chain dehydrogenases/reductases (SDR) family.

Its pathway is hormone biosynthesis. In terms of biological role, short-chain dehydrogenase/reductase involved in the biosynthesis of abscisic acid (ABA), a phytohormone that acts antagonistically toward salicylic acid (SA), jasmonic acid (JA) and ethylene (ETH) signaling, to impede plant defense responses. During pathogen-host interaction, ABA plays a dual role in disease severity by increasing plant susceptibility and accelerating pathogenesis in the fungus itself. The first step of the pathway catalyzes the reaction from farnesyl diphosphate to alpha-ionylideneethane performed by the alpha-ionylideneethane synthase ABA3 via a three-step reaction mechanism involving 2 neutral intermediates, beta-farnesene and allofarnesene. The cytochrome P450 monooxygenase ABA1 might then be involved in the conversion of alpha-ionylideneethane to alpha-ionylideneacetic acid. Alpha-ionylideneacetic acid is further converted to abscisic acid in 2 steps involving the cytochrome P450 monooxygenase ABA2 and the short-chain dehydrogenase/reductase ABA4, via the intermediates 1'-deoxy-ABA or 1',4'-trans-diol-ABA, depending on the order of action of these 2 enzymes. ABA2 is responsible for the hydroxylation of carbon atom C-1' and ABA4 might be involved in the oxidation of the C-4' carbon atom. The polypeptide is Short-chain dehydrogenase/reductase ABA4 (ABA4) (Pyricularia oryzae (strain Y34) (Rice blast fungus)).